Reading from the N-terminus, the 936-residue chain is Protein translocase subunit SecA (936 aa).

ATP contacts are provided by residues Gln-90, 108 to 112, and Asp-499; that span reads GEGKT.

The protein belongs to the SecA family. As to quaternary structure, monomer and homodimer. Part of the essential Sec protein translocation apparatus which comprises SecA, SecYEG and auxiliary proteins SecDF. Other proteins may also be involved.

It is found in the cell inner membrane. It localises to the cellular thylakoid membrane. Its subcellular location is the cytoplasm. The enzyme catalyses ATP + H2O + cellular proteinSide 1 = ADP + phosphate + cellular proteinSide 2.. Functionally, part of the Sec protein translocase complex. Interacts with the SecYEG preprotein conducting channel. Has a central role in coupling the hydrolysis of ATP to the transfer of proteins into and across the cell membrane, serving as an ATP-driven molecular motor driving the stepwise translocation of polypeptide chains across the membrane. Its function is as follows. Probably participates in protein translocation into and across both the cytoplasmic and thylakoid membranes in cyanobacterial cells. The sequence is that of Protein translocase subunit SecA from Trichodesmium erythraeum (strain IMS101).